Here is a 334-residue protein sequence, read N- to C-terminus: Oligopeptide transport ATP-binding protein OppF (334 aa).

Positions 12–265 (LEIADLKVHF…PLHPYTRALM (254 aa)) constitute an ABC transporter domain. 57-64 (GESGCGKS) serves as a coordination point for ATP.

Belongs to the ABC transporter superfamily. In terms of assembly, the complex is composed of two ATP-binding proteins (OppD and OppF), two transmembrane proteins (OppB and OppC) and a solute-binding protein (OppA or MppA).

The protein resides in the cell inner membrane. It catalyses the reaction a [peptide](out) + ATP + H2O = a [peptide](in) + ADP + phosphate + H(+). The enzyme catalyses L-alanyl-gamma-D-glutamyl-meso-2,6-diaminopimelate(out) + ATP + H2O = L-alanyl-gamma-D-glutamyl-meso-2,6-diaminopimelate(in) + ADP + phosphate + H(+). In terms of biological role, part of the ABC transporter complex OppABCDF involved in the uptake of oligopeptides and of the ABC transporter complex MppA-OppBCDF involved in the uptake of the cell wall murein tripeptide L-alanyl-gamma-D-glutamyl-meso-diaminopimelate. Probably responsible for energy coupling to the transport system. Plays an important nutritional role and is involved in the recycling of cell wall peptides. The protein is Oligopeptide transport ATP-binding protein OppF (oppF) of Escherichia coli (strain K12).